The sequence spans 280 residues: Probable endonuclease 4 (280 aa).

Histidine 69, histidine 109, glutamate 145, aspartate 179, histidine 182, histidine 216, aspartate 229, histidine 231, and glutamate 261 together coordinate Zn(2+).

This sequence belongs to the AP endonuclease 2 family. It depends on Zn(2+) as a cofactor.

The catalysed reaction is Endonucleolytic cleavage to 5'-phosphooligonucleotide end-products.. Endonuclease IV plays a role in DNA repair. It cleaves phosphodiester bonds at apurinic or apyrimidinic (AP) sites, generating a 3'-hydroxyl group and a 5'-terminal sugar phosphate. The protein is Probable endonuclease 4 of Actinobacillus pleuropneumoniae serotype 7 (strain AP76).